A 175-amino-acid polypeptide reads, in one-letter code: Thioredoxin-like protein CITRX, chloroplastic (175 aa).

A chloroplast-targeting transit peptide spans 1-73 (MQAASLAFHP…REDYLVKKLS (73 aa)). One can recognise a Thioredoxin domain in the interval 74 to 175 (AKEIQELIKG…MMRDIINNDL (102 aa)). Catalysis depends on nucleophile residues cysteine 98 and cysteine 101. Cysteine 98 and cysteine 101 are disulfide-bonded.

It belongs to the thioredoxin family. Plant CITRX-type subfamily.

Its subcellular location is the plastid. It localises to the chloroplast. In terms of biological role, probable thiol-disulfide oxidoreductase that may play a role in proper chloroplast development. This is Thioredoxin-like protein CITRX, chloroplastic from Solanum tuberosum (Potato).